Reading from the N-terminus, the 267-residue chain is MNFGKAILKATRRGEHTRIWEYSQAPLQWLGSPGEPPVYYLRNPNGGLLGGDRHRIEIGLGPGSALEIRTQGAMRLHPGLIRQQVKVKLAPTSQLIWIPHPTIPGAGADFRQQVQIELDPTARLAYAEIWTAGRLAMDERWQFEHLANCLQVWVTAGIPSSPEGRKLWLQEHIDLHFPHRQVSAASVLGSHLCWGSLYLLGDWPEPTWLTVHISGTESPYWLVKSPDPICKGWILRQVGPQAEAIWRHFGQVALQLAQAKGGSPQGW.

Belongs to the UreD family. UreD, UreF and UreG form a complex that acts as a GTP-hydrolysis-dependent molecular chaperone, activating the urease apoprotein by helping to assemble the nickel containing metallocenter of UreC. The UreE protein probably delivers the nickel.

It localises to the cytoplasm. Functionally, required for maturation of urease via the functional incorporation of the urease nickel metallocenter. The chain is Urease accessory protein UreD from Synechococcus sp. (strain JA-2-3B'a(2-13)) (Cyanobacteria bacterium Yellowstone B-Prime).